The following is a 387-amino-acid chain: Succinate--CoA ligase [ADP-forming] subunit beta (387 aa).

The region spanning 9–244 is the ATP-grasp domain; the sequence is KQLFASYGLP…VSQEDDRENR (236 aa). ATP is bound by residues Lys46, 53–55, Glu99, Cys102, and Glu107; that span reads GRG. 2 residues coordinate Mg(2+): Asn199 and Asp213. Substrate-binding positions include Asn264 and 321 to 323; that span reads GIV.

Belongs to the succinate/malate CoA ligase beta subunit family. In terms of assembly, heterotetramer of two alpha and two beta subunits. Requires Mg(2+) as cofactor.

The catalysed reaction is succinate + ATP + CoA = succinyl-CoA + ADP + phosphate. The enzyme catalyses GTP + succinate + CoA = succinyl-CoA + GDP + phosphate. Its pathway is carbohydrate metabolism; tricarboxylic acid cycle; succinate from succinyl-CoA (ligase route): step 1/1. Functionally, succinyl-CoA synthetase functions in the citric acid cycle (TCA), coupling the hydrolysis of succinyl-CoA to the synthesis of either ATP or GTP and thus represents the only step of substrate-level phosphorylation in the TCA. The beta subunit provides nucleotide specificity of the enzyme and binds the substrate succinate, while the binding sites for coenzyme A and phosphate are found in the alpha subunit. The sequence is that of Succinate--CoA ligase [ADP-forming] subunit beta from Legionella pneumophila (strain Corby).